The primary structure comprises 91 residues: MRRVLIRVKGKVQGVCFRRFALERARELGVTGYVTNMDDGSVQILAQGSAPLVEKLIDWCWEGSPAASVNAVEVNEDEADEIYLDFSITQS.

An Acylphosphatase-like domain is found at 3–90; that stretch reads RVLIRVKGKV…EIYLDFSITQ (88 aa). Residues Arg-18 and Asn-36 contribute to the active site.

Belongs to the acylphosphatase family.

It catalyses the reaction an acyl phosphate + H2O = a carboxylate + phosphate + H(+). This Shewanella amazonensis (strain ATCC BAA-1098 / SB2B) protein is Acylphosphatase (acyP).